The following is a 261-amino-acid chain: MTHQTHAYHMVNPSPWPLTGALSALLMTSGLIMWFHFNSTTLLMLGLTTNMLTMYQWWRDVVRESTFQGHHTPNVQKGLRYGMILFIISEVLFFTGFFWAFYHSSLAPTPELGGCWPPTGIHPLNPLEVPLLNTSVLLASGVSITWAHHSLMEGNRNHMLQALFITIALGVYFTLLQASEYYEAPFTISDGVYGSTFFVATGFHGLHVIIGSTFLIVCFFRQLKFHFTSSHHFGFEAAAWYWHFVDVVWLFLYVSIYWWGS.

At 1-15 (MTHQTHAYHMVNPSP) the chain is on the mitochondrial matrix side. A helical transmembrane segment spans residues 16–34 (WPLTGALSALLMTSGLIMW). Topologically, residues 35 to 40 (FHFNST) are mitochondrial intermembrane. The helical transmembrane segment at 41-66 (TLLMLGLTTNMLTMYQWWRDVVREST) threads the bilayer. Residues 67-72 (FQGHHT) are Mitochondrial matrix-facing. The helical transmembrane segment at 73 to 105 (PNVQKGLRYGMILFIISEVLFFTGFFWAFYHSS) threads the bilayer. Topologically, residues 106-128 (LAPTPELGGCWPPTGIHPLNPLE) are mitochondrial intermembrane. Residues 129–152 (VPLLNTSVLLASGVSITWAHHSLM) traverse the membrane as a helical segment. Topologically, residues 153 to 155 (EGN) are mitochondrial matrix. A helical transmembrane segment spans residues 156 to 183 (RNHMLQALFITIALGVYFTLLQASEYYE). Over 184 to 190 (APFTISD) the chain is Mitochondrial intermembrane. A helical transmembrane segment spans residues 191 to 223 (GVYGSTFFVATGFHGLHVIIGSTFLIVCFFRQL). Residues 224 to 232 (KFHFTSSHH) lie on the Mitochondrial matrix side of the membrane. Residues 233–256 (FGFEAAAWYWHFVDVVWLFLYVSI) traverse the membrane as a helical segment. Residues 257–261 (YWWGS) lie on the Mitochondrial intermembrane side of the membrane.

It belongs to the cytochrome c oxidase subunit 3 family. In terms of assembly, component of the cytochrome c oxidase (complex IV, CIV), a multisubunit enzyme composed of 14 subunits. The complex is composed of a catalytic core of 3 subunits MT-CO1, MT-CO2 and MT-CO3, encoded in the mitochondrial DNA, and 11 supernumerary subunits COX4I, COX5A, COX5B, COX6A, COX6B, COX6C, COX7A, COX7B, COX7C, COX8 and NDUFA4, which are encoded in the nuclear genome. The complex exists as a monomer or a dimer and forms supercomplexes (SCs) in the inner mitochondrial membrane with NADH-ubiquinone oxidoreductase (complex I, CI) and ubiquinol-cytochrome c oxidoreductase (cytochrome b-c1 complex, complex III, CIII), resulting in different assemblies (supercomplex SCI(1)III(2)IV(1) and megacomplex MCI(2)III(2)IV(2)).

Its subcellular location is the mitochondrion inner membrane. The enzyme catalyses 4 Fe(II)-[cytochrome c] + O2 + 8 H(+)(in) = 4 Fe(III)-[cytochrome c] + 2 H2O + 4 H(+)(out). Its function is as follows. Component of the cytochrome c oxidase, the last enzyme in the mitochondrial electron transport chain which drives oxidative phosphorylation. The respiratory chain contains 3 multisubunit complexes succinate dehydrogenase (complex II, CII), ubiquinol-cytochrome c oxidoreductase (cytochrome b-c1 complex, complex III, CIII) and cytochrome c oxidase (complex IV, CIV), that cooperate to transfer electrons derived from NADH and succinate to molecular oxygen, creating an electrochemical gradient over the inner membrane that drives transmembrane transport and the ATP synthase. Cytochrome c oxidase is the component of the respiratory chain that catalyzes the reduction of oxygen to water. Electrons originating from reduced cytochrome c in the intermembrane space (IMS) are transferred via the dinuclear copper A center (CU(A)) of subunit 2 and heme A of subunit 1 to the active site in subunit 1, a binuclear center (BNC) formed by heme A3 and copper B (CU(B)). The BNC reduces molecular oxygen to 2 water molecules using 4 electrons from cytochrome c in the IMS and 4 protons from the mitochondrial matrix. The protein is Cytochrome c oxidase subunit 3 (MT-CO3) of Gazella spekei (Speke's gazelle).